Reading from the N-terminus, the 111-residue chain is Ribonuclease P protein component 1 (111 aa).

The protein belongs to the eukaryotic/archaeal RNase P protein component 1 family. In terms of assembly, consists of a catalytic RNA component and at least 4-5 protein subunits.

It is found in the cytoplasm. The enzyme catalyses Endonucleolytic cleavage of RNA, removing 5'-extranucleotides from tRNA precursor.. Part of ribonuclease P, a protein complex that generates mature tRNA molecules by cleaving their 5'-ends. This is Ribonuclease P protein component 1 from Hyperthermus butylicus (strain DSM 5456 / JCM 9403 / PLM1-5).